The chain runs to 198 residues: Protein uvp1 (198 aa).

The region spanning 1-140 (MIIGYARKST…SGLAAARARG (140 aa)) is the Resolvase/invertase-type recombinase catalytic domain. Ser-9 functions as the O-(5'-phospho-DNA)-serine intermediate in the catalytic mechanism. Positions 168–187 (VGAVAKRFNVSRMTIYRYTT) form a DNA-binding region, H-T-H motif.

Belongs to the site-specific recombinase resolvase family.

In terms of biological role, cooperates with the mucAB genes in the DNA repair process. Could be a resolvase-invertase protein. This chain is Protein uvp1 (uvp1), found in Escherichia coli.